A 948-amino-acid chain; its full sequence is Protein translocase subunit SecA (948 aa).

ATP is bound by residues Gln91, 109-113 (GEGKT), and Asp509.

It belongs to the SecA family. As to quaternary structure, monomer and homodimer. Part of the essential Sec protein translocation apparatus which comprises SecA, SecYEG and auxiliary proteins SecDF. Other proteins may also be involved.

It localises to the cell inner membrane. Its subcellular location is the cellular thylakoid membrane. The protein resides in the cytoplasm. The enzyme catalyses ATP + H2O + cellular proteinSide 1 = ADP + phosphate + cellular proteinSide 2.. In terms of biological role, part of the Sec protein translocase complex. Interacts with the SecYEG preprotein conducting channel. Has a central role in coupling the hydrolysis of ATP to the transfer of proteins into and across the cell membrane, serving as an ATP-driven molecular motor driving the stepwise translocation of polypeptide chains across the membrane. Functionally, probably participates in protein translocation into and across both the cytoplasmic and thylakoid membranes in cyanobacterial cells. The chain is Protein translocase subunit SecA from Synechococcus elongatus (strain ATCC 33912 / PCC 7942 / FACHB-805) (Anacystis nidulans R2).